Reading from the N-terminus, the 307-residue chain is Transcription initiation factor IIB (307 aa).

2 consecutive repeat copies span residues 123 to 206 and 217 to 298.

Belongs to the TFIIB family.

In terms of biological role, stabilizes TBP binding to an archaeal box-A promoter. Also responsible for recruiting RNA polymerase II to the pre-initiation complex (DNA-TBP-TFIIB). In Sulfolobus acidocaldarius (strain ATCC 33909 / DSM 639 / JCM 8929 / NBRC 15157 / NCIMB 11770), this protein is Transcription initiation factor IIB.